Consider the following 714-residue polypeptide: Cyclomaltodextrin glucanotransferase (714 aa).

The N-terminal stretch at methionine 1 to alanine 27 is a signal peptide. Positions serine 28 to proline 165 are A1. Aspartate 54, asparagine 59, asparagine 60, glycine 78, and aspartate 80 together coordinate Ca(2+). Tyrosine 127–tryptophan 128 is a substrate binding site. Residue asparagine 166 participates in Ca(2+) binding. Positions asparagine 166–histidine 229 are b. Histidine 167 lines the substrate pocket. Isoleucine 217 contacts Ca(2+). Asparagine 220–aspartate 223 serves as a coordination point for substrate. Aspartate 226 contacts Ca(2+). Residues asparagine 230–tyrosine 434 are A2. Residue arginine 254 participates in substrate binding. The active-site Nucleophile is the aspartate 256. Position 259–260 (lysine 259–histidine 260) interacts with substrate. Histidine 260 serves as a coordination point for Ca(2+). Glutamate 285 (proton donor) is an active-site residue. Residues histidine 355, aspartate 399, and arginine 403 each contribute to the substrate site. The interval glycine 435–proline 523 is c. Residues glutamate 524 to leucine 610 are d. An IPT/TIG domain is found at proline 527 to phenylalanine 607. In terms of domain architecture, CBM20 spans valine 609–asparagine 714. The interval threonine 611–asparagine 714 is e.

It belongs to the glycosyl hydrolase 13 family. As to quaternary structure, monomer. Ca(2+) serves as cofactor.

The protein resides in the secreted. It catalyses the reaction Cyclizes part of a (1-&gt;4)-alpha-D-glucan chain by formation of a (1-&gt;4)-alpha-D-glucosidic bond.. This Paenibacillus macerans (Bacillus macerans) protein is Cyclomaltodextrin glucanotransferase (cgtM).